Here is a 354-residue protein sequence, read N- to C-terminus: Methionine import ATP-binding protein MetN (354 aa).

The ABC transporter domain maps to 8–250 (LDHIDITFHQ…PKEALTQEFI (243 aa)). 42–49 (GYSGAGKS) provides a ligand contact to ATP.

Belongs to the ABC transporter superfamily. Methionine importer (TC 3.A.1.24) family. As to quaternary structure, the complex is composed of two ATP-binding proteins (MetN), two transmembrane proteins (MetI) and a solute-binding protein (MetQ).

The protein resides in the cell membrane. It carries out the reaction L-methionine(out) + ATP + H2O = L-methionine(in) + ADP + phosphate + H(+). The catalysed reaction is D-methionine(out) + ATP + H2O = D-methionine(in) + ADP + phosphate + H(+). Part of the ABC transporter complex MetNIQ involved in methionine import. Responsible for energy coupling to the transport system. In Streptococcus pyogenes serotype M4 (strain MGAS10750), this protein is Methionine import ATP-binding protein MetN.